A 431-amino-acid polypeptide reads, in one-letter code: Trigger factor (431 aa).

Residues 158 to 243 (GYLVALETWS…VIEVSEPVLL (86 aa)) enclose the PPIase FKBP-type domain.

This sequence belongs to the FKBP-type PPIase family. Tig subfamily.

It localises to the cytoplasm. The catalysed reaction is [protein]-peptidylproline (omega=180) = [protein]-peptidylproline (omega=0). Its function is as follows. Involved in protein export. Acts as a chaperone by maintaining the newly synthesized protein in an open conformation. Functions as a peptidyl-prolyl cis-trans isomerase. The polypeptide is Trigger factor (Xylella fastidiosa (strain M23)).